Consider the following 171-residue polypeptide: Adenine phosphoribosyltransferase (171 aa).

Belongs to the purine/pyrimidine phosphoribosyltransferase family. As to quaternary structure, homodimer.

Its subcellular location is the cytoplasm. It catalyses the reaction AMP + diphosphate = 5-phospho-alpha-D-ribose 1-diphosphate + adenine. It functions in the pathway purine metabolism; AMP biosynthesis via salvage pathway; AMP from adenine: step 1/1. Its function is as follows. Catalyzes a salvage reaction resulting in the formation of AMP, that is energically less costly than de novo synthesis. The polypeptide is Adenine phosphoribosyltransferase (Rhodospirillum rubrum (strain ATCC 11170 / ATH 1.1.1 / DSM 467 / LMG 4362 / NCIMB 8255 / S1)).